The chain runs to 364 residues: Protein LATERAL BRANCHING OXIDOREDUCTASE 1 (364 aa).

The Fe2OG dioxygenase domain maps to arginine 203 to proline 312. Histidine 235, aspartate 237, and histidine 293 together coordinate Fe cation. Arginine 303 provides a ligand contact to 2-oxoglutarate.

It belongs to the iron/ascorbate-dependent oxidoreductase family. As to quaternary structure, monomer. Fe(2+) is required as a cofactor. It depends on L-ascorbate as a cofactor. As to expression, expressed in the vasculature throughout the plant and in the buds and root tips.

The protein resides in the cytoplasm. The enzyme catalyses (11R)-methyl carlactonoate + 2-oxoglutarate + O2 = (11R)-hydroxymethyl carlactonoate + succinate + CO2. Functionally, oxoglutarate-dependent dioxygenase involved in the biosynthesis of strigolactone natural products, bioactive compounds promoting plant fitness and soil microbe interactions, but preventing shoot branching. Catalyzes the hydroxylation of (11R)-methyl carlactonoate (MeCLA) to produce (11R)-hydroxymethyl carlactonoate (1'-HO-MeCLA) in final stages of strigolactone biosynthesis, downstream of MAX1 and CLAMT. This is Protein LATERAL BRANCHING OXIDOREDUCTASE 1 from Arabidopsis thaliana (Mouse-ear cress).